We begin with the raw amino-acid sequence, 1571 residues long: Guanine nucleotide-releasing factor 2 (1571 aa).

3 disordered regions span residues 28–85 (LPPH…RDTN), 202–271 (INSG…KLAR), and 287–316 (MRTTNNTLGRSHSPHSPRTKHGTKAPPTTE). The segment covering 55–73 (QLHHHHHQQHHHNHHRLWK) has biased composition (basic residues). Residues 74–83 (TQRQSWSPRD) are compositionally biased toward polar residues. The span at 230–248 (TPGGSSRVGGAGAGGGGGV) shows a compositional bias: gly residues. The segment covering 287–297 (MRTTNNTLGRS) has biased composition (polar residues). The segment covering 298 to 309 (HSPHSPRTKHGT) has biased composition (basic residues). Ser-496 and Ser-523 each carry phosphoserine. Disordered stretches follow at residues 513–580 (HNVN…QASP), 614–646 (RSRSPDENSQCSFDSALNHSREEEDQQQQHQHL), 695–719 (GEGVAAAASGDGETNSNRHSNESGF), 728–747 (STQTTDYSVQSSTKSSSSNS), 776–868 (QRHI…SEVA), and 879–898 (LNHHPHTASAGQLQQWHSKH). Thr-524 carries the phosphothreonine modification. Ser-526 is subject to Phosphoserine. Residues 532-550 (SPPPKPPLPNRASNPPPLP) show a composition bias toward pro residues. An SH3-binding motif is present at residues 546–556 (PPPLPPKRRSQ). The segment covering 556 to 579 (QPSASAGTVGVGCSSSTSTSNQAS) has biased composition (low complexity). Residue Ser-615 is modified to Phosphoserine. Over residues 620-631 (ENSQCSFDSALN) the composition is skewed to polar residues. The span at 697-707 (GVAAAASGDGE) shows a compositional bias: low complexity. The span at 708–718 (TNSNRHSNESG) shows a compositional bias: polar residues. Composition is skewed to low complexity over residues 735 to 747 (SVQSSTKSSSSNS) and 780 to 824 (SSSS…DLAP). Positions 820-831 (ADLAPALPPKSI) match the SH3-binding motif. Polar residues predominate over residues 851-866 (VQSSSGWASHRSSQSE). Short sequence motifs (SH3-binding) lie at residues 924-935 (DQEPPPLPIKKK) and 986-997 (LEMPPALPPKNY). The tract at residues 1013-1038 (PVIVTTPPPSPKPTLGENGSTGRPDS) is disordered. The region spanning 1170-1292 (DGPEVKGGYI…LRNKFVEKVT (123 aa)) is the N-terminal Ras-GEF domain. The Ras-GEF domain maps to 1339–1564 (KSLEIAEQMT…WQISEKIKPR (226 aa)).

Ubiquitous.

Guanine nucleotide-releasing protein that binds to SH3 domain of Crk. Transduces signals from Crk to activate RAS. Also involved in MAPK activation. This is Guanine nucleotide-releasing factor 2 (C3G) from Drosophila melanogaster (Fruit fly).